The primary structure comprises 284 residues: Bifunctional protein FolD (284 aa).

166–168 provides a ligand contact to NADP(+); the sequence is GAS.

Belongs to the tetrahydrofolate dehydrogenase/cyclohydrolase family. In terms of assembly, homodimer.

The enzyme catalyses (6R)-5,10-methylene-5,6,7,8-tetrahydrofolate + NADP(+) = (6R)-5,10-methenyltetrahydrofolate + NADPH. It carries out the reaction (6R)-5,10-methenyltetrahydrofolate + H2O = (6R)-10-formyltetrahydrofolate + H(+). It functions in the pathway one-carbon metabolism; tetrahydrofolate interconversion. Its function is as follows. Catalyzes the oxidation of 5,10-methylenetetrahydrofolate to 5,10-methenyltetrahydrofolate and then the hydrolysis of 5,10-methenyltetrahydrofolate to 10-formyltetrahydrofolate. The protein is Bifunctional protein FolD of Nitrosococcus oceani (strain ATCC 19707 / BCRC 17464 / JCM 30415 / NCIMB 11848 / C-107).